Reading from the N-terminus, the 728-residue chain is Catalase-peroxidase (728 aa).

Positions 1 to 16 (MDNPTDSAGKCPVAHG) are cleaved as a signal peptide. Positions 1–26 (MDNPTDSAGKCPVAHGNTPRSRSNRD) are disordered. Residues 96–218 (WHSAGTYRIT…LGAVQMGFIY (123 aa)) constitute a cross-link (tryptophyl-tyrosyl-methioninium (Trp-Tyr) (with M-244)). Residue histidine 97 is the Proton acceptor of the active site. The segment at residues 218–244 (YVNPEGPNGNSDPLASARDIRETFARM) is a cross-link (tryptophyl-tyrosyl-methioninium (Tyr-Met) (with W-96)). Residue histidine 259 coordinates heme b.

This sequence belongs to the peroxidase family. Peroxidase/catalase subfamily. In terms of assembly, homodimer or homotetramer. Heme b serves as cofactor. In terms of processing, formation of the three residue Trp-Tyr-Met cross-link is important for the catalase, but not the peroxidase activity of the enzyme.

It catalyses the reaction H2O2 + AH2 = A + 2 H2O. The enzyme catalyses 2 H2O2 = O2 + 2 H2O. Bifunctional enzyme with both catalase and broad-spectrum peroxidase activity. This Rhizobium leguminosarum bv. phaseoli protein is Catalase-peroxidase.